Here is a 652-residue protein sequence, read N- to C-terminus: DNA mismatch repair protein MutL (652 aa).

Disordered stretches follow at residues 357–377 (LGAN…NYPS) and 425–457 (PDKG…NSTD). The segment covering 365 to 375 (SHSSNTPTLNY) has biased composition (polar residues).

The protein belongs to the DNA mismatch repair MutL/HexB family.

Functionally, this protein is involved in the repair of mismatches in DNA. It is required for dam-dependent methyl-directed DNA mismatch repair. May act as a 'molecular matchmaker', a protein that promotes the formation of a stable complex between two or more DNA-binding proteins in an ATP-dependent manner without itself being part of a final effector complex. The chain is DNA mismatch repair protein MutL from Colwellia psychrerythraea (strain 34H / ATCC BAA-681) (Vibrio psychroerythus).